The primary structure comprises 227 residues: Izumo sperm-egg fusion protein 4 (227 aa).

A signal peptide spans 1 to 24 (MFGQGRLGQAMALLLFLGMTAALA). 2 N-linked (GlcNAc...) asparagine glycosylation sites follow: Asn-153 and Asn-214.

The protein belongs to the Izumo family.

Its subcellular location is the secreted. This is Izumo sperm-egg fusion protein 4 (Izumo4) from Mus musculus (Mouse).